The chain runs to 195 residues: Interferon tau (195 aa).

Positions 1-23 are cleaved as a signal peptide; the sequence is MAFVLSLRMALVLVSYCPGGSLG. 2 cysteine pairs are disulfide-bonded: C24–C122 and C52–C162. N101 carries N-linked (GlcNAc...) asparagine glycosylation.

This sequence belongs to the alpha/beta interferon family. IFN-alphaII subfamily. As to expression, constitutively and exclusively expressed in the mononuclear cells of the extraembryonic trophectoderm.

It is found in the secreted. In terms of biological role, paracrine hormone primarily responsible for maternal recognition of pregnancy. Interacts with endometrial receptors, probably type I interferon receptors, and blocks estrogen receptor expression, preventing the estrogen-induced increase in oxytocin receptor expression in the endometrium. This results in the suppression of the pulsatile endometrial release of the luteolytic hormone prostaglandin F2-alpha, hindering the regression of the corpus luteum (luteolysis) and therefore a return to ovarian cyclicity. This, and a possible direct effect of IFN-tau on prostaglandin synthesis, leads in turn to continued ovarian progesterone secretion, which stimulates the secretion by the endometrium of the nutrients required for the growth of the conceptus. In summary, displays particularly high antiviral and antiproliferative potency concurrently with particular weak cytotoxicity, high antiluteolytic activity and immunomodulatory properties. In contrast with other IFNs, IFN-tau is not virally inducible. This is Interferon tau (IFNT) from Ovibos moschatus (Muskox).